A 222-amino-acid chain; its full sequence is Large ribosomal subunit protein uL1 (222 aa).

Belongs to the universal ribosomal protein uL1 family. In terms of assembly, part of the 50S ribosomal subunit.

Functionally, binds directly to 23S rRNA. Probably involved in E site tRNA release. Protein L1 is also a translational repressor protein, it controls the translation of its operon by binding to its mRNA. This chain is Large ribosomal subunit protein uL1, found in Pyrobaculum islandicum (strain DSM 4184 / JCM 9189 / GEO3).